A 63-amino-acid polypeptide reads, in one-letter code: Antimicrobial peptide 2 (63 aa).

A signal peptide spans 1–27 (MAKVPIAFLKFVIVLILFIAMSGMIEA). Disulfide bonds link Cys-28-Cys-45, Cys-35-Cys-49, and Cys-44-Cys-60.

This sequence belongs to the AMP family. Homodimer. As to expression, seed specific.

It localises to the secreted. Possesses antifungal activity and is also active on two tested Gram-positive bacteria but is non-toxic for Gram-negative bacteria and cultured human cells. The protein is Antimicrobial peptide 2 (AMP2) of Mirabilis jalapa (Garden four-o'clock).